The primary structure comprises 303 residues: 5'-3' exonuclease (303 aa).

Residues 179 to 262 form the 5'-3' exonuclease domain; it reads ISPAQWVDVK…LATITTEIEA (84 aa).

5'-3' exonuclease acting preferentially on double-stranded DNA. This chain is 5'-3' exonuclease, found in Halalkalibacterium halodurans (strain ATCC BAA-125 / DSM 18197 / FERM 7344 / JCM 9153 / C-125) (Bacillus halodurans).